A 506-amino-acid chain; its full sequence is Adenylosuccinate synthetase (506 aa).

GTP-binding positions include 35–41 and 63–65; these read GDEGKGK and GHT. The active-site Proton acceptor is the Asp36. Residues Asp36 and Gly63 each coordinate Mg(2+). IMP is bound by residues 36 to 39, 61 to 64, Thr212, Arg226, Asn304, Thr319, and Arg383; these read DEGK and NAGH. The Proton donor role is filled by His64. Substrate is bound at residue 379–385; it reads VTTKRKR. GTP-binding positions include Arg385, 411-413, and 494-496; these read KLD and GVG.

Belongs to the adenylosuccinate synthetase family. As to quaternary structure, homodimer. It depends on Mg(2+) as a cofactor.

Its subcellular location is the cytoplasm. It carries out the reaction IMP + L-aspartate + GTP = N(6)-(1,2-dicarboxyethyl)-AMP + GDP + phosphate + 2 H(+). It participates in purine metabolism; AMP biosynthesis via de novo pathway; AMP from IMP: step 1/2. Plays an important role in the de novo pathway and in the salvage pathway of purine nucleotide biosynthesis. Catalyzes the first committed step in the biosynthesis of AMP from IMP. The chain is Adenylosuccinate synthetase from Drosophila yakuba (Fruit fly).